Reading from the N-terminus, the 937-residue chain is Outer membrane usher protein CS3-2 (937 aa).

The protein belongs to the fimbrial export usher family. A 97 kDa form of the protein is thought to be due to post-translational processing of isoform 104 kDa.

The protein resides in the cell outer membrane. In terms of biological role, these proteins are essential for the biogenesis of mature CS3 pili, but not for synthesis of the CS3 pilin subunit. The chain is Outer membrane usher protein CS3-2 from Escherichia coli.